Here is a 469-residue protein sequence, read N- to C-terminus: Pancreatic lipase-related protein 2 (469 aa).

An N-terminal signal peptide occupies residues 1 to 17; sequence MLPPWTLGLLLLATVRG. Cysteine 21 and cysteine 27 are disulfide-bonded. Residues 93–105 form a required for galactolipase activity region; that stretch reads IHGFLDKAEDSWP. The cysteines at positions 109 and 120 are disulfide-linked. The active-site Nucleophile is serine 171. The active-site Charge relay system is aspartate 195. Ca(2+) is bound by residues glutamate 206, arginine 209, aspartate 211, and aspartate 214. Cysteine 256 and cysteine 280 are oxidised to a cystine. Residues 257-279 are required for galactolipase activity; it reads KKNVLSTITDIDGIWEGIGGFVS. Catalysis depends on histidine 282, which acts as the Charge relay system. 2 disulfide bridges follow: cysteine 304–cysteine 315 and cysteine 318–cysteine 323. 2 N-linked (GlcNAc...) asparagine glycosylation sites follow: asparagine 353 and asparagine 428. The PLAT domain maps to 357 to 469; it reads WRYKISVTLS…ENVLQSLYPC (113 aa). A disulfide bridge connects residues cysteine 453 and cysteine 469.

Belongs to the AB hydrolase superfamily. Lipase family. As to expression, pancreas.

Its subcellular location is the secreted. The protein resides in the zymogen granule membrane. It localises to the cell projection. It is found in the neuron projection. It carries out the reaction a triacylglycerol + H2O = a diacylglycerol + a fatty acid + H(+). The enzyme catalyses a 1,2-diacyl-3-O-(beta-D-galactosyl)-sn-glycerol + 2 H2O = 3-beta-D-galactosyl-sn-glycerol + 2 a fatty acid + 2 H(+). It catalyses the reaction 1,2,3-tri-(9Z-octadecenoyl)-glycerol + H2O = di-(9Z)-octadecenoylglycerol + (9Z)-octadecenoate + H(+). The catalysed reaction is di-(9Z)-octadecenoylglycerol + H2O = (9Z-octadecenoyl)-glycerol + (9Z)-octadecenoate + H(+). It carries out the reaction (9Z-octadecenoyl)-glycerol + H2O = glycerol + (9Z)-octadecenoate + H(+). The enzyme catalyses 1-(9Z-octadecenoyl)-glycerol + H2O = glycerol + (9Z)-octadecenoate + H(+). It catalyses the reaction 1,2,3-tripropanoylglycerol + H2O = dipropanoylglycerol + propanoate + H(+). The catalysed reaction is 1,2,3-tributanoylglycerol + H2O = dibutanoylglycerol + butanoate + H(+). It carries out the reaction 1,2,3-trioctanoylglycerol + H2O = dioctanoylglycerol + octanoate + H(+). The enzyme catalyses 1,2-didecanoylglycerol + H2O = decanoylglycerol + decanoate + H(+). It catalyses the reaction long chain 1,2-diacyl-3-O-beta-D-galactosyl-sn-glycerol + H2O = long chain acyl-3-O-beta-D-galactosyl-sn-glycerol + a fatty acid + H(+). The catalysed reaction is 1,2-dioctanoyl-3-O-beta-D-galactosyl-sn-glycerol + H2O = octanoyl-3-(beta-D-galactosyl)-sn-glycerol + octanoate + H(+). It carries out the reaction 1,2-didodecanoyl-3-beta-D-galactosyl-sn-glycerol + H2O = dodecanoyl-3-beta-D-galactosyl-sn-glycerol + dodecanoate + H(+). The enzyme catalyses 1-beta-D-galactosyl-2,3-didodecanoyl-sn-glycerol + H2O = 1-beta-D-galactosyl-dodecanoyl-sn-glycerol + dodecanoate + H(+). It catalyses the reaction a 1,2-diacyl-3-O-[alpha-D-galactosyl-(1-&gt;6)-beta-D-galactosyl]-sn-glycerol + H2O = acyl-3-O-[alpha-D-galactosyl-(1-&gt;6)-beta-D-galactosyl]-sn-glycerol + a fatty acid + H(+). The catalysed reaction is long chain 1,2-diacyl-3-O-[alpha-D-galactosyl-(1-&gt;6)-beta-D-galactosyl]-sn-glycerol + H2O = long chain acyl-3-O-[alpha-D-galactosyl-(1-&gt;6)-beta-D-galactosyl]-sn-glycerol + a fatty acid + H(+). It carries out the reaction 1,2-dioctanoyl-3-O-[alpha-D-galactosyl-(1-&gt;6)-beta-D-galactosyl]-sn-glycerol + H2O = octanoyl-3-O-[alpha-D-galactosyl-(1-&gt;6)-beta-D-galactosyl]-sn-glycerol + octanoate + H(+). The enzyme catalyses 1,2-didodecanoyl-3-O-[alpha-D-galactosyl-(1-&gt;6)-beta-D-galactosyl]-sn-glycerol + H2O = dodecanoyl-3-O-[alpha-D-galactosyl-(1-&gt;6)-beta-D-galactosyl]-sn-glycerol + dodecanoate + H(+). It catalyses the reaction a 1,2-diacyl-sn-glycero-3-phosphocholine + H2O = a monoacyl-sn-glycero-3-phosphocholine + a fatty acid + H(+). Its pathway is glycerolipid metabolism; triacylglycerol degradation. The protein operates within glycolipid metabolism. Its activity is regulated as follows. Regulated by CLPS and bile salts levels ranging 1-5 mM in neonates and 2-30 mM in healthy adults. CLPS stimulates milk fat digestion in the presence of 4 mM bile salts. Triacylglycerol lipase activity toward short- and medium-chain triglycerides is inhibited by increasing concentrations of bile salts and weakly reactivated by CLPS. Optimal triacylglycerol lipase activity is reached at bile salts concentrations ranging from 0.1 to 0.5 mM and then decreases at concentrations higher than 1 mM. Lipase activity toward long-chain glycerolipids is stimulated by CLPS in the presence of 4 mM bile salts. Galactolipase activity is inhibited at high concentrations of bile salts. Triacylglycerol lipase activity is inhibited by anti-obesity drug tetrahydrolipstatin. In terms of biological role, lipase that primarily hydrolyzes triglycerides and galactosylglycerides. In neonates, may play a major role in pancreatic digestion of dietary fats such as milk fat globules enriched in long-chain triglycerides. Hydrolyzes short-, medium- and long-chain fatty acyls in triglycerides without apparent positional specificity. Can completely deacylate triacylglycerols. When the liver matures and bile salt synthesis increases, likely functions mainly as a galactolipase and monoacylglycerol lipase. Hydrolyzes monogalactosyldiglycerols (MGDG) and digalactosyldiacylglycerols (DGDG) present in a plant-based diet, releasing long-chain polyunsaturated fatty acids. Hydrolyzes medium- and long-chain fatty acyls in galactolipids. May act together with LIPF to hydrolyze partially digested triglycerides. Hydrolyzes long-chain monoglycerides with high efficiency. In cytotoxic T cells, contributes to perforin-dependent cell lysis, but is unlikely to mediate direct cytotoxicity. Also has low phospholipase activity. In neurons, required for the localization of the phospholipid 1-oleoyl-2-palmitoyl-PC (OPPC) to neurite tips through acyl chain remodeling of membrane phospholipids. The resulting OPPC-rich lipid membrane domain recruits the t-SNARE protein STX4 by selectively interacting with the STX4 transmembrane domain and this promotes surface expression of the dopamine transporter SLC6A3/DAT at neurite tips by facilitating fusion of SLC6A3-containing transport vesicles with the plasma membrane. The protein is Pancreatic lipase-related protein 2 of Homo sapiens (Human).